A 393-amino-acid chain; its full sequence is Probable N-acetyl-LL-diaminopimelate aminotransferase (393 aa).

The residue at position 231 (lysine 231) is an N6-(pyridoxal phosphate)lysine.

This sequence belongs to the class-I pyridoxal-phosphate-dependent aminotransferase family. As to quaternary structure, homodimer. The cofactor is pyridoxal 5'-phosphate.

It localises to the cytoplasm. The enzyme catalyses N-acetyl-(2S,6S)-2,6-diaminopimelate + 2-oxoglutarate = L-2-acetamido-6-oxoheptanedioate + L-glutamate. It participates in amino-acid biosynthesis; L-lysine biosynthesis via DAP pathway; LL-2,6-diaminopimelate from (S)-tetrahydrodipicolinate (acetylase route): step 2/3. Functionally, essential for murein biosynthesis. Probably catalyzes the conversion of L-2-acetamido-6-oxopimelate to N-acetyl-LL-2,6-diaminopimelate. The chain is Probable N-acetyl-LL-diaminopimelate aminotransferase from Bacillus subtilis (strain 168).